An 878-amino-acid polypeptide reads, in one-letter code: Pyruvate, phosphate dikinase (878 aa).

The N-terminal stretch occupies residues 1-347 (MKKLIYYFGS…LYILQTRTAK (347 aa)). An ATP-binding site is contributed by arginine 96. The linker 1 stretch occupies residues 348 to 404 (RTAIAAINIAVQMVEEKLISKEQALMRIDPESLNQLLHTRIDYSKGLTSIAEGLPAS). The interval 405-502 (PGAATGIAVF…VIKQGDIITI (98 aa)) is central. Threonine 457 bears the Phosphothreonine; by PDRP1 mark. Histidine 459 (tele-phosphohistidine intermediate) is an active-site residue. The linker 2 stretch occupies residues 503-537 (DGGSGKIFLGEMPLIQPTFSEESKLILDWADEISS). The tract at residues 538-878 (LKVRANAETV…AAAQAKIKHG (341 aa)) is C-terminal. Positions 565, 621, 749, 770, 771, 772, and 773 each coordinate substrate. Glutamate 749 is a binding site for Mg(2+). Aspartate 773 provides a ligand contact to Mg(2+). Residue cysteine 835 is the Proton donor of the active site.

Belongs to the PEP-utilizing enzyme family. In terms of assembly, homodimer. Mg(2+) is required as a cofactor. Post-translationally, phosphorylation of Thr-457 in the dark inactivates the enzyme. Dephosphorylation upon light stimulation reactivates the enzyme.

It catalyses the reaction pyruvate + phosphate + ATP = phosphoenolpyruvate + AMP + diphosphate + H(+). Its activity is regulated as follows. Activated by light-induced dephosphorylation. Inhibited by dark-induced phosphorylation. Both reactions are catalyzed by PDRP1. Functionally, catalyzes the reversible phosphorylation of pyruvate and phosphate. In Rickettsia conorii (strain ATCC VR-613 / Malish 7), this protein is Pyruvate, phosphate dikinase (ppdK).